A 118-amino-acid polypeptide reads, in one-letter code: NADH-quinone oxidoreductase subunit A (118 aa).

3 helical membrane-spanning segments follow: residues 6-26, 64-84, and 87-107; these read LPVLIFLLVALVVGVAPLLMG, AILFILFDLEIAFLFPWAVVF, and IGMTGFLAMMLFLAILVVGFI.

It belongs to the complex I subunit 3 family. NDH-1 is composed of 14 different subunits. Subunits NuoA, H, J, K, L, M, N constitute the membrane sector of the complex.

It localises to the cell inner membrane. The enzyme catalyses a quinone + NADH + 5 H(+)(in) = a quinol + NAD(+) + 4 H(+)(out). In terms of biological role, NDH-1 shuttles electrons from NADH, via FMN and iron-sulfur (Fe-S) centers, to quinones in the respiratory chain. The immediate electron acceptor for the enzyme in this species is believed to be ubiquinone. Couples the redox reaction to proton translocation (for every two electrons transferred, four hydrogen ions are translocated across the cytoplasmic membrane), and thus conserves the redox energy in a proton gradient. The polypeptide is NADH-quinone oxidoreductase subunit A (Acidithiobacillus ferrooxidans (strain ATCC 53993 / BNL-5-31) (Leptospirillum ferrooxidans (ATCC 53993))).